Consider the following 496-residue polypeptide: Cobyric acid synthase (496 aa).

The region spanning 250–437 (TLKVIAPALP…LHGLFESPQA (188 aa)) is the GATase cobBQ-type domain. Catalysis depends on cysteine 331, which acts as the Nucleophile. The active site involves histidine 429.

The protein belongs to the CobB/CobQ family. CobQ subfamily.

The protein operates within cofactor biosynthesis; adenosylcobalamin biosynthesis. Catalyzes amidations at positions B, D, E, and G on adenosylcobyrinic A,C-diamide. NH(2) groups are provided by glutamine, and one molecule of ATP is hydrogenolyzed for each amidation. The protein is Cobyric acid synthase of Hahella chejuensis (strain KCTC 2396).